The primary structure comprises 229 residues: ATP-dependent dethiobiotin synthetase BioD (229 aa).

Position 15-20 (15-20 (EIGKTL)) interacts with ATP. Thr-19 serves as a coordination point for Mg(2+). The active site involves Lys-40. ATP contacts are provided by residues Asp-57, 118–121 (EGVG), and 207–209 (PRL). Mg(2+) contacts are provided by Asp-57 and Glu-118.

Belongs to the dethiobiotin synthetase family. In terms of assembly, homodimer. The cofactor is Mg(2+).

It localises to the cytoplasm. The enzyme catalyses (7R,8S)-7,8-diammoniononanoate + CO2 + ATP = (4R,5S)-dethiobiotin + ADP + phosphate + 3 H(+). It functions in the pathway cofactor biosynthesis; biotin biosynthesis; biotin from 7,8-diaminononanoate: step 1/2. Functionally, catalyzes a mechanistically unusual reaction, the ATP-dependent insertion of CO2 between the N7 and N8 nitrogen atoms of 7,8-diaminopelargonic acid (DAPA, also called 7,8-diammoniononanoate) to form a ureido ring. This is ATP-dependent dethiobiotin synthetase BioD from Ralstonia nicotianae (strain ATCC BAA-1114 / GMI1000) (Ralstonia solanacearum).